We begin with the raw amino-acid sequence, 212 residues long: ER lumen protein-retaining receptor 1-B (212 aa).

The Lumenal segment spans residues 1 to 4; sequence MNIF. The chain crosses the membrane as a helical span at residues 5–24; it reads RFLGDISHLSAIIILLLKIW. Residues 25 to 32 are Cytoplasmic-facing; that stretch reads KSRSCAGI. Residues 33–52 traverse the membrane as a helical segment; sequence SGKSQLLFAIVFTTRYLDLF. The interval 47 to 48 is interaction with the K-D-E-L motif on target proteins; the sequence is RY. The Lumenal portion of the chain corresponds to 53 to 58; that stretch reads TNFISF. A helical membrane pass occupies residues 59–79; the sequence is YNTSMKVVYVASSYATVWMIY. At 80 to 92 the chain is on the cytoplasmic side; it reads SKFKATYDGNHDT. The chain crosses the membrane as a helical span at residues 93-110; the sequence is FRVEFLIVPTAILSFLVN. At 111–116 the chain is on the lumenal side; sequence HDFTPL. The chain crosses the membrane as a helical span at residues 117–135; that stretch reads EILWTFSIYLESVAILPQL. At 136–149 the chain is on the cytoplasmic side; the sequence is FMVSKTGEAETITS. Residues 150 to 168 form a helical membrane-spanning segment; it reads HYLFALGIYRTLYLFNWIW. Residues 159–169 form an interaction with the K-D-E-L motif on target proteins region; sequence RTLYLFNWIWR. At 169–178 the chain is on the lumenal side; it reads RYQFEEFFDL. The helical transmembrane segment at 179–199 threads the bilayer; it reads IAIVAGLVQTVLYCDFFYLYI. Residues 200-212 lie on the Cytoplasmic side of the membrane; it reads TKVLKGKKLSLPA. The segment at 204-207 is important for recycling of cargo proteins with the sequence motif K-D-E-L from the Golgi to the endoplasmic reticulum; sequence KGKK.

This sequence belongs to the ERD2 family.

It localises to the golgi apparatus membrane. The protein resides in the cytoplasmic vesicle. It is found in the COPI-coated vesicle membrane. Its subcellular location is the endoplasmic reticulum membrane. The protein localises to the endoplasmic reticulum-Golgi intermediate compartment membrane. Its function is as follows. Receptor for the C-terminal sequence motif K-D-E-L that is present on endoplasmic reticulum resident proteins and that mediates their recycling from the Golgi back to the endoplasmic reticulum. This Xenopus laevis (African clawed frog) protein is ER lumen protein-retaining receptor 1-B (kdelr1-b).